The primary structure comprises 155 residues: Ribosome maturation factor RimP (155 aa).

The protein belongs to the RimP family.

The protein resides in the cytoplasm. Functionally, required for maturation of 30S ribosomal subunits. The chain is Ribosome maturation factor RimP from Staphylococcus epidermidis (strain ATCC 35984 / DSM 28319 / BCRC 17069 / CCUG 31568 / BM 3577 / RP62A).